A 305-amino-acid polypeptide reads, in one-letter code: Divergent heme oxygenase-like protein (305 aa).

A signal peptide spans 1-18; that stretch reads MIRKIIILMFTFFSNIHN. The interval 1–83 is sufficient for apicoplast targeting; the sequence is MIRKIIILMF…GVDKNNINYN (83 aa). Asn132, Asn159, and Asn288 each carry an N-linked (GlcNAc...) asparagine glycan.

Post-translationally, proteolytically cleaved; targeted by its N-terminal leader sequence for import into the apicoplast where it undergoes proteolytic processing, resulting in an N-terminus starting at or near Gly-33 in the mature protein.

Its subcellular location is the plastid. It localises to the apicoplast. Its function is as follows. Essential for blood-stage parasite viability. Required for apicoplast biogenesis. Associates with the apicoplast genome and mediates apicoplast gene expression. Can bind heme. Can bind protoporphyrin IX. The chain is Divergent heme oxygenase-like protein from Plasmodium falciparum (isolate 3D7).